The chain runs to 152 residues: Protein CHLOROPLAST VESICULATION (152 aa).

Residues 1–22 constitute a chloroplast transit peptide; that stretch reads MAGRISCCLNLPPLDSNSAQSL. A helical membrane pass occupies residues 48-65; the sequence is CSFVLGVAATVVIGGIQI. The important for chloroplast destabilization and the formation of CV-containing vesicles stretch occupies residues 92-152; the sequence is RWSDKRTCPP…RVNRGGCFSV (61 aa).

As to quaternary structure, interacts with the photosystem II subunit PsbO1 via its C-terminal region in the chloroplast thylakoid membrane and in CV-containing vesicles (CCVs). Mostly expressed in senescent and mature leaves but not in young leaves.

The protein localises to the plastid. The protein resides in the chloroplast membrane. It localises to the chloroplast thylakoid membrane. Its subcellular location is the chloroplast envelope. It is found in the vacuole. The protein localises to the vesicle. Functionally, triggers stress-induced chloroplast degradation, independently of autophagy and senescence-associated vacuoles. After targeting to the chloroplast, triggers its destabilization and subsequent disassembly, inducing the formation of CV-containing vesicles (CCVs) carrying stromal proteins, envelope membrane proteins, and thylakoid membrane proteins which are released from the chloroplasts and mobilized to the vacuole for proteolysis. The protein is Protein CHLOROPLAST VESICULATION of Arabidopsis thaliana (Mouse-ear cress).